Reading from the N-terminus, the 219-residue chain is Proteasome subunit beta type-9 (219 aa).

Residues 1 to 20 (MLRAGAPTAGSFRTEEVHTG) constitute a propeptide, removed in mature form. Catalysis depends on Thr21, which acts as the Nucleophile. Residues Lys53 and Lys109 each carry the N6-acetyllysine modification.

It belongs to the peptidase T1B family. As to quaternary structure, the 26S proteasome consists of a 20S proteasome core and two 19S regulatory subunits. The 20S proteasome core is composed of 28 subunits that are arranged in four stacked rings, resulting in a barrel-shaped structure. The two end rings are each formed by seven alpha subunits, and the two central rings are each formed by seven beta subunits. The catalytic chamber with the active sites is on the inside of the barrel. Component of the immunoproteasome, where it displaces the equivalent housekeeping subunit PSMB6. Component of the spermatoproteasome, a form of the proteasome specifically found in testis. Post-translationally, autocleaved. The resulting N-terminal Thr residue of the mature subunit is responsible for the nucleophile proteolytic activity.

The protein resides in the cytoplasm. Its subcellular location is the nucleus. It carries out the reaction Cleavage of peptide bonds with very broad specificity.. Functionally, the proteasome is a multicatalytic proteinase complex which is characterized by its ability to cleave peptides with Arg, Phe, Tyr, Leu, and Glu adjacent to the leaving group at neutral or slightly basic pH. The proteasome has an ATP-dependent proteolytic activity. This subunit is involved in antigen processing to generate class I binding peptides. The polypeptide is Proteasome subunit beta type-9 (Psmb9) (Mus musculus bactrianus (Southwestern Asian house mouse)).